A 104-amino-acid polypeptide reads, in one-letter code: Class I hydrophobin 4 (104 aa).

The signal sequence occupies residues 1 to 16 (MFASTVFVSLLAVAAA). Intrachain disulfides connect C26–C85, C34–C79, C35–C61, and C86–C99.

It belongs to the fungal hydrophobin family. Self-assembles to form functional amyloid fibrils called rodlets. Self-assembly into fibrillar rodlets occurs spontaneously at hydrophobic:hydrophilic interfaces and the rodlets further associate laterally to form amphipathic monolayers.

The protein resides in the secreted. It localises to the cell wall. Its function is as follows. Aerial growth, conidiation, and dispersal of filamentous fungi in the environment rely upon a capability of their secreting small amphipathic proteins called hydrophobins (HPBs) with low sequence identity. Class I can self-assemble into an outermost layer of rodlet bundles on aerial cell surfaces, conferring cellular hydrophobicity that supports fungal growth, development and dispersal; whereas Class II form highly ordered films at water-air interfaces through intermolecular interactions but contribute nothing to the rodlet structure. HYD4 is a class I hydrophobin that negatively regulates aerial mycelial growth, conidiation, carotenoid and adenosine synthesis, resistance to oxidant stress, and fruiting body development. Seems not to be involved in the mycelial growth rate, the hydrophobicity of the mycelia and conidia, nor the conidial virulence on silkworm pupae. This is Class I hydrophobin 4 from Cordyceps militaris (Caterpillar fungus).